Reading from the N-terminus, the 450-residue chain is Phosphoglucosamine mutase (450 aa).

S103 functions as the Phosphoserine intermediate in the catalytic mechanism. Residues S103, D243, D245, and D247 each coordinate Mg(2+). S103 bears the Phosphoserine mark.

The protein belongs to the phosphohexose mutase family. It depends on Mg(2+) as a cofactor. Activated by phosphorylation.

The catalysed reaction is alpha-D-glucosamine 1-phosphate = D-glucosamine 6-phosphate. Its function is as follows. Catalyzes the conversion of glucosamine-6-phosphate to glucosamine-1-phosphate. This is Phosphoglucosamine mutase from Latilactobacillus sakei subsp. sakei (strain 23K) (Lactobacillus sakei subsp. sakei).